The primary structure comprises 209 residues: 2-phospho-L-lactate guanylyltransferase (209 aa).

Belongs to the CofC family. As to quaternary structure, homodimer.

The catalysed reaction is (2S)-2-phospholactate + GTP + H(+) = (2S)-lactyl-2-diphospho-5'-guanosine + diphosphate. It functions in the pathway cofactor biosynthesis; coenzyme F420 biosynthesis. In terms of biological role, guanylyltransferase that catalyzes the activation of (2S)-2-phospholactate (2-PL) as (2S)-lactyl-2-diphospho-5'-guanosine, via the condensation of 2-PL with GTP. It is involved in the biosynthesis of coenzyme F420, a hydride carrier cofactor. This is 2-phospho-L-lactate guanylyltransferase from Methanosphaerula palustris (strain ATCC BAA-1556 / DSM 19958 / E1-9c).